The sequence spans 539 residues: Cytochrome c oxidase subunit 1 homolog, bacteroid (539 aa).

3 consecutive transmembrane segments (helical) span residues 4–24 (TVEM…AGLA), 28–48 (LFGA…LVLM), and 75–95 (GVVA…VVAL). His117 contacts heme b. The next 8 helical transmembrane spans lie at 118–138 (TSAV…FYVV), 154–174 (FVFW…LLGI), 187–207 (VDLW…GTIM), 214–234 (IYVA…LHVV), 265–285 (GHNA…YYFI), 298–318 (LSII…PHHL), 330–350 (LGMV…INGL), and 368–388 (MMVM…MMSI). Positions 266, 316, and 317 each coordinate Cu cation. Heme b-binding residues include His404 and His406. The next 4 helical transmembrane spans lie at 405–425 (VHSG…YYLV), 443–463 (HFWL…VAGI), 475–495 (QGFL…YYVM), and 499–519 (GGAL…MTIL).

The protein belongs to the heme-copper respiratory oxidase family. Cu(2+) serves as cofactor. Heme b is required as a cofactor.

The protein localises to the cell membrane. It carries out the reaction 4 Fe(II)-[cytochrome c] + O2 + 8 H(+)(in) = 4 Fe(III)-[cytochrome c] + 2 H2O + 4 H(+)(out). It functions in the pathway energy metabolism; oxidative phosphorylation. Its function is as follows. Cytochrome c oxidase is the component of the respiratory chain that catalyzes the reduction of oxygen to water. Subunits 1-3 form the functional core of the enzyme complex. Co I is the catalytic subunit of the enzyme. Electrons originating in cytochrome c or a quinol are transferred to the bimetallic center formed by a high-spin heme and copper B. This Rhizobium meliloti (strain 1021) (Ensifer meliloti) protein is Cytochrome c oxidase subunit 1 homolog, bacteroid (fixN).